The sequence spans 1011 residues: DNA-directed RNA polymerase subunit beta'' (1011 aa).

Residues cysteine 216, cysteine 282, cysteine 288, and cysteine 291 each contribute to the Zn(2+) site.

The protein belongs to the RNA polymerase beta' chain family. RpoC2 subfamily. In plastids the minimal PEP RNA polymerase catalytic core is composed of four subunits: alpha, beta, beta', and beta''. When a (nuclear-encoded) sigma factor is associated with the core the holoenzyme is formed, which can initiate transcription. Zn(2+) is required as a cofactor.

The protein localises to the plastid. It localises to the chloroplast. The enzyme catalyses RNA(n) + a ribonucleoside 5'-triphosphate = RNA(n+1) + diphosphate. Its function is as follows. DNA-dependent RNA polymerase catalyzes the transcription of DNA into RNA using the four ribonucleoside triphosphates as substrates. The chain is DNA-directed RNA polymerase subunit beta'' from Ostreococcus tauri.